A 737-amino-acid polypeptide reads, in one-letter code: Protein-glucosylgalactosylhydroxylysine glucosidase (737 aa).

300 to 301 (WD) serves as a coordination point for substrate. Residue Glu-430 is the Proton donor of the active site. Substrate is bound at residue 498–499 (KQ). A disordered region spans residues 681–737 (RSAGRIQMSPPKLPGSSSSEFPGRTFSDVRDPLQSPLWVTLGSSSPTESLTVDPASE). Positions 721 to 730 (LGSSSPTESL) are enriched in polar residues.

The protein belongs to the glycosyl hydrolase 65 family.

It catalyses the reaction (5R)-5-O-[alpha-D-glucosyl-(1-&gt;2)-beta-D-galactosyl]-5-hydroxy-L-lysyl-[collagen] + H2O = (5R)-5-O-(beta-D-galactosyl)-5-hydroxy-L-lysyl-[collagen] + D-glucose. Catalyzes the hydrolysis of glucose from the disaccharide unit linked to hydroxylysine residues of collagen and collagen-like proteins. The protein is Protein-glucosylgalactosylhydroxylysine glucosidase of Homo sapiens (Human).